The following is a 657-amino-acid chain: N-acetylgalactosaminyltransferase 7 (657 aa).

Over 1–6 (MRLKIG) the chain is Cytoplasmic. A helical; Signal-anchor for type II membrane protein transmembrane segment spans residues 7–29 (FILRSLLVVGSFLGLVVLWSSLT). The Lumenal segment spans residues 30 to 657 (PRPDDPSPLS…KWEMNNIHSV (628 aa)). Residues 31–66 (RPDDPSPLSRMREDRDVNDPMPNRGGNGLAPGEDRF) form a disordered region. 5 cysteine pairs are disulfide-bonded: cysteine 197-cysteine 435, cysteine 426-cysteine 507, cysteine 545-cysteine 562, cysteine 585-cysteine 600, and cysteine 625-cysteine 640. A catalytic subdomain A region spans residues 206–317 (LLTSSVVIVF…VNWYAPLVAP (112 aa)). Substrate contacts are provided by aspartate 247 and arginine 277. Mn(2+) contacts are provided by aspartate 301 and histidine 303. The segment at 381 to 443 (PYRSPAMAGG…PCSRVGHIYR (63 aa)) is catalytic subdomain B. Tryptophan 412 is a binding site for substrate. Histidine 440 lines the Mn(2+) pocket. Arginine 443 serves as a coordination point for substrate. In terms of domain architecture, Ricin B-type lectin spans 532 to 652 (VDWGEIRGFE…SKTTQKWEMN (121 aa)).

The protein belongs to the glycosyltransferase 2 family. GalNAc-T subfamily. Mn(2+) is required as a cofactor.

It localises to the golgi apparatus membrane. The catalysed reaction is L-seryl-[protein] + UDP-N-acetyl-alpha-D-galactosamine = a 3-O-[N-acetyl-alpha-D-galactosaminyl]-L-seryl-[protein] + UDP + H(+). It carries out the reaction L-threonyl-[protein] + UDP-N-acetyl-alpha-D-galactosamine = a 3-O-[N-acetyl-alpha-D-galactosaminyl]-L-threonyl-[protein] + UDP + H(+). It functions in the pathway protein modification; protein glycosylation. Its function is as follows. Glycopeptide transferase involved in O-linked oligosaccharide biosynthesis, which catalyzes the transfer of an N-acetyl-D-galactosamine residue to an already glycosylated peptide. In contrast to other proteins of the family, it does not act as a peptide transferase that transfers GalNAc onto serine or threonine residue on the protein receptor, but instead requires the prior addition of a GalNAc on a peptide before adding additional GalNAc moieties. Some peptide transferase activity is however not excluded, considering that its appropriate peptide substrate may remain unidentified. The polypeptide is N-acetylgalactosaminyltransferase 7 (GALNT7) (Pongo abelii (Sumatran orangutan)).